The following is a 413-amino-acid chain: Protein cycle (413 aa).

The disordered stretch occupies residues 1 to 43 (MEVQEFCENMEEIEDENYDEEKSARTSDENRKQNHSEIEKRRR). Acidic residues predominate over residues 8–19 (ENMEEIEDENYD). Basic and acidic residues predominate over residues 20–41 (EEKSARTSDENRKQNHSEIEKR). Residues 30–83 (NRKQNHSEIEKRRRDKMNTYINELSSMIPMCFAMQRKLDKLTVLRMAVQHLRGI) form the bHLH domain. The PAS 1 domain occupies 104-175 (DQELKMIILQ…EQLSSLEQCP (72 aa)). The segment at 219 to 242 (NQIKEESDTSSSSRSSTKRKSRLT) is disordered. Residues 297-367 (PASLDNHPNI…ESHKMVMQVP (71 aa)) form the PAS 2 domain. The PAC domain occupies 372–413 (TQVYRFRCKDNSYIQLQSEWRAFKNPWTSEIDYIIAKNSVFL).

Efficient DNA binding requires dimerization with another bHLH protein. Forms a heterodimer with Clock in order to activate PER and TIM transcription. Expressed in head and ovary.

The protein resides in the nucleus. Putative transcription factor involved in the generation of biological rhythms. Activates cycling transcription of Period (PER) and Timeless (TIM) by binding to the E-box (5'-CACGTG-3') present in their promoters. This chain is Protein cycle (cyc), found in Drosophila melanogaster (Fruit fly).